We begin with the raw amino-acid sequence, 349 residues long: Putative ABC transporter permease protein MJ0087 (349 aa).

Transmembrane regions (helical) follow at residues 15–35 (IIFG…ALCV), 69–89 (IFAA…MQCI), 100–120 (MGIS…FGFG), 135–155 (MITI…LLLA), 166–186 (ILAG…IQYF), 206–226 (AIWT…IYFM), 254–274 (LIGM…LGII), 295–315 (FLIP…DTFA), and 318–338 (IIAP…APMF).

The protein belongs to the binding-protein-dependent transport system permease family. FecCD subfamily.

It localises to the cell membrane. Functionally, probably part of a binding-protein-dependent transport system. Probably responsible for the translocation of the substrate across the membrane. The polypeptide is Putative ABC transporter permease protein MJ0087 (Methanocaldococcus jannaschii (strain ATCC 43067 / DSM 2661 / JAL-1 / JCM 10045 / NBRC 100440) (Methanococcus jannaschii)).